The sequence spans 1503 residues: Transient receptor potential cation channel subfamily M member 2 (1503 aa).

A disordered region spans residues 1–20; it reads MEPSALRKAGSEQEEGFEGL. The Cytoplasmic portion of the chain corresponds to 1–752; that stretch reads MEPSALRKAG…WWGQLSVDNG (752 aa). ADP-D-ribose-binding residues include T174, N179, R302, G333, and T336. Phosphothreonine is present on T740. Residues 753-769 lie within the membrane without spanning it; sequence LWRVTLCMLAFPLLLTG. Residues 770–795 lie on the Cytoplasmic side of the membrane; that stretch reads LISFREKRLQDVGTPAARARAFFTAP. A helical membrane pass occupies residues 796-816; that stretch reads VVVFHLNILSYFAFLCLFAYV. Residues 817–827 lie on the Extracellular side of the membrane; sequence LMVDFQPVPSW. Residues 828–848 form a helical membrane-spanning segment; it reads CECAIYLWLFSLVCEEMRQLF. Positions 843 and 846 each coordinate Ca(2+). The Cytoplasmic portion of the chain corresponds to 849–867; it reads YDPDECGLMKKAALYFSDF. Residues 868 to 888 traverse the membrane as a helical segment; the sequence is WNKLDVGAILLFVAGLTCRLI. A Ca(2+)-binding site is contributed by N869. Residues 889 to 896 lie on the Extracellular side of the membrane; it reads PATLYPGR. A helical membrane pass occupies residues 897-917; that stretch reads VILSLDFILFCLRLMHIFTIS. The Cytoplasmic segment spans residues 918-929; that stretch reads KTLGPKIIIVKR. The helical transmembrane segment at 930-950 threads the bilayer; that stretch reads MMKDVFFFLFLLAVWVVSFGV. Residues 951–970 lie on the Extracellular side of the membrane; sequence AKQAILIHNERRVDWLFRGA. An intramembrane region (pore-forming) is located at residues 971 to 985; the sequence is VYHSYLTIFGQIPGY. The Selectivity filter signature appears at 979–982; that stretch reads FGQI. At 986 to 1022 the chain is on the extracellular side; sequence IDGVNFNPEHCSPNGTDPYKPKCPESDATQQRPAFPE. C996 and C1008 are oxidised to a cystine. The chain crosses the membrane as a helical span at residues 1023–1044; sequence WLTVLLLCLYLLFTNILLLNLL. The Cytoplasmic portion of the chain corresponds to 1045-1079; sequence IAMFNYTFQQVQEHTDQIWKFQRHDLIEEYHGRPA. Residue E1073 coordinates Ca(2+). Residues 1080–1098 lie within the membrane without spanning it; the sequence is APPPFILLSHLQLFIKRVV. Residues 1099 to 1503 are Cytoplasmic-facing; it reads LKTPAKRHKQ…KAAAEFGAHY (405 aa). The interval 1206–1237 is disordered; it reads EADVPTLASQKAAEEPDAEPGGRKKTEEPGDS. Residues 1354–1498 form the Nudix hydrolase domain; it reads RWRRNEDGAI…KTLLQKAAAE (145 aa). L1381 and S1382 together coordinate ADP-D-ribose. The Nudix box motif lies at 1390-1411; that stretch reads GSREPGEMLPRKLKRILRQEHW. Residues D1431, R1433, Y1485, and N1487 each coordinate ADP-D-ribose.

Belongs to the transient receptor (TC 1.A.4) family. LTrpC subfamily. TRPM2 sub-subfamily. Homotetramer. Isoform 1 can interact with isoform 3. This interaction decreases Ca(2+) influx through isoform 1 and suppresses susceptibility to oxidative stress-induced cell death. Phosphorylation of TRPM2 at Thr-740 by protein kinase C (PKC) counteracts the effect of cytosolic Ca(2+) and elevates the temperature threshold. As to expression, highly expressed in brain and peripheral blood cells, such as neutrophils. Also detected in bone marrow, spleen, heart, liver and lung. Isoform 2 is found in neutrophil granulocytes.

Its subcellular location is the cell membrane. It localises to the perikaryon. It is found in the cell projection. The protein localises to the cytoplasmic vesicle. The protein resides in the lysosome. The catalysed reaction is Ca(2+)(in) = Ca(2+)(out). It catalyses the reaction Na(+)(in) = Na(+)(out). With respect to regulation, activated by intracellular ADP-ribose, beta-NAD (NAD(+)) and similar compounds, and by oxidative stress caused by reactive oxygen or nitrogen species. Ca(2+) and PI(4,5)P2 are required for channel opening by ADP-ribose. Activation by ADP-ribose and beta-NAD is strongly increased by moderate heat (35 to 40 degrees Celsius). Likewise, reactive oxygen species lower the threshold for activation by moderate heat (37 degrees Celsius). Activated by moderate heat (35 to 40 degrees Celsius). Inactivated by exposure to extracellular pH between 4.0 and 6.5; irreversibly inactivated when open channels are exposed to extracellular pH between 4.0 and 6.5, while pre-exposure of closed channels to extracellular pH 5.5 gives rise to currents that rapidly inactivate, but protects against irreversible inactivation. Inactivated by intracellular ATP. Activated by arachidonic acid. Inhibited by 2-aminoethyl diphenylborinate (2-APB). Nonselective, voltage-independent cation channel that mediates Na(+) and Ca(2+) influx, leading to increased cytoplasmic Ca(2+) levels. Functions as a ligand-gated ion channel, gated by intracellular adenosine diphosphate ribose (ADP-ribose), Ca(2+), warm temperature, and oxidative stress. The precise physiological activators are under debate; the true, physiological activators may be ADP-ribose and ADP-ribose-2'-phosphate. Binding of ADP-ribose to the cytoplasmic Nudix domain causes a conformation change; the channel is primed but still requires Ca(2+) binding to trigger channel opening. Extracellular Ca(2+) passes through the channel and increases channel activity. Contributes to Ca(2+) release from intracellular stores in response to ADP-ribose. Plays a role in numerous processes that involve signaling via intracellular Ca(2+) levels. Besides, mediates the release of lysosomal Zn(2+) stores in response to reactive oxygen species, leading to increased cytosolic Zn(2+) levels. Plays a role in mediating behavorial and physiological responses to moderate heat and thereby contributes to body temperature homeostasis. Plays a role in insulin secretion, a process that requires increased cytoplasmic Ca(2+) levels. Required for normal IFNG and cytokine secretion and normal innate immune immunity in response to bacterial infection. Required for normal phagocytosis and cytokine release by macrophages exposed to zymosan (in vitro). Plays a role in dendritic cell differentiation and maturation, and in dendritic cell chemotaxis via its role in regulating cytoplasmic Ca(2+) levels. Plays a role in the regulation of the reorganization of the actin cytoskeleton and filopodia formation in response to reactive oxygen species via its role in increasing cytoplasmic Ca(2+) and Zn(2+) levels. Confers susceptibility to cell death following oxidative stress. Its function is as follows. Lacks cation channel activity. Does not mediate cation transport in response to oxidative stress or ADP-ribose. In terms of biological role, lacks cation channel activity and negatively regulates the channel activity of isoform 1. Negatively regulates susceptibility to cell death in reposponse to oxidative stress. In Homo sapiens (Human), this protein is Transient receptor potential cation channel subfamily M member 2 (TRPM2).